A 139-amino-acid chain; its full sequence is Plastocyanin (139 aa).

Positions 1–34 are cleaved as a signal peptide; sequence MKLIAASLRRLSLAVLTVLLVVSSFAVFTPSAAA. The 101-residue stretch at 35-135 folds into the Plastocyanin-like domain; it reads ETYTVKLGSD…HRGAGMVGKI (101 aa). 4 residues coordinate Cu cation: His-73, Cys-123, His-126, and Met-131.

The protein belongs to the plastocyanin family. Requires Cu(2+) as cofactor.

Its subcellular location is the cellular thylakoid membrane. Functionally, participates in electron transfer between P700 and the cytochrome b6-f complex in photosystem I. In Trichormus variabilis (strain ATCC 29413 / PCC 7937) (Anabaena variabilis), this protein is Plastocyanin (petE).